A 69-amino-acid chain; its full sequence is Large ribosomal subunit protein uL29 (69 aa).

This sequence belongs to the universal ribosomal protein uL29 family.

The polypeptide is Large ribosomal subunit protein uL29 (Parasynechococcus marenigrum (strain WH8102)).